Consider the following 302-residue polypeptide: Dioxygenase olcK (302 aa).

Fe cation contacts are provided by His-136, Asp-138, and His-213.

It belongs to the PhyH family. Homodimer. It depends on Fe cation as a cofactor.

It localises to the peroxisome matrix. It functions in the pathway secondary metabolite biosynthesis; terpenoid biosynthesis. Its function is as follows. Dioxygenase; part of the gene cluster that mediates the biosynthesis of 15-deoxyoxalicine B. The first step of the pathway is the synthesis of nicotinyl-CoA from nicotinic acid by the nicotinic acid-CoA ligase olcI. Nicotinyl-CoA is then a substrate of polyketide synthase olcA to produce 4-hydroxy-6-(3-pyridinyl)-2H-pyran-2-one (HPPO) which is further prenylated by the polyprenyl transferase olcH to yield geranylgeranyl-HPPO. Geranylgeranyl pyrophosphate is provided by the cluster-specific geranylgeranyl pyrophosphate synthase olcC. The FAD-dependent monooxygenase olcE catalyzes the epoxidation of geranylgeranyl-HPPO and the terpene cyclase olcD catalyzes the cyclization of the terpenoid component, resulting in the formation of the tricyclic terpene moiety seen in predecaturin E. The cytochrome P450 monooxygenase then catalyzes the allylic oxidation of predecaturin E, which is followed by spirocylization with concomitant loss of one molecule of water to form decaturin E. Decaturin E is the substrate of the cytochrome P450 monooxygenase olcJ which hydroxylates it at the C-29 position to form decaturin F. The short-chain dehydrogenase/reductase olcF may catalyze the oxidation of decaturin F to generate the 29-hydroxyl-27-one intermediate, and subsequent hemiacetal formation probably leads to the formation of decaturin C. The dioxygenase olcK may be a peroxisomal enzyme that catalyzes the hydroxylation of decaturin C into decaturin A once decaturin C is shuttled into the peroxisome by the MFS transporter olcL. Finally the cytochrome P450 monooxygenase olcB catalyzes the oxidative rearrangement to yield 15-deoxyoxalicine B. In the absence of olcJ, decaturin E may be shunted to a pathway in which it is oxidized to a ketone, possibly by olcF, to form decaturin D, which undergoes further allylic oxidation to yield decaturin G. Moreover, in the absence of oclK or oclL, oclB can convert decaturin C into 15-deoxyoxalicine A. This chain is Dioxygenase olcK, found in Penicillium canescens.